Here is a 425-residue protein sequence, read N- to C-terminus: Imidazolonepropionase (425 aa).

2 residues coordinate Fe(3+): H78 and H80. H78 and H80 together coordinate Zn(2+). R87, Y150, and H183 together coordinate 4-imidazolone-5-propanoate. Y150 contributes to the N-formimidoyl-L-glutamate binding site. A Fe(3+)-binding site is contributed by H248. H248 lines the Zn(2+) pocket. Q251 is a binding site for 4-imidazolone-5-propanoate. D323 contacts Fe(3+). D323 contributes to the Zn(2+) binding site. Residues N325 and G327 each contribute to the N-formimidoyl-L-glutamate site. T328 is a 4-imidazolone-5-propanoate binding site.

Belongs to the metallo-dependent hydrolases superfamily. HutI family. Requires Zn(2+) as cofactor. The cofactor is Fe(3+).

The protein resides in the cytoplasm. The enzyme catalyses 4-imidazolone-5-propanoate + H2O = N-formimidoyl-L-glutamate. It functions in the pathway amino-acid degradation; L-histidine degradation into L-glutamate; N-formimidoyl-L-glutamate from L-histidine: step 3/3. Functionally, catalyzes the hydrolytic cleavage of the carbon-nitrogen bond in imidazolone-5-propanoate to yield N-formimidoyl-L-glutamate. It is the third step in the universal histidine degradation pathway. This chain is Imidazolonepropionase, found in Polaromonas sp. (strain JS666 / ATCC BAA-500).